The chain runs to 218 residues: Pyridoxine/pyridoxamine 5'-phosphate oxidase (218 aa).

FMN contacts are provided by residues 66–71 (RVVLLK), R87, K88, and Q110. Residue K71 coordinates substrate. Positions 128, 132, and 136 each coordinate substrate. FMN is bound by residues 145–146 (QS) and W190. Residue 196-198 (RLH) coordinates substrate. R200 provides a ligand contact to FMN.

Belongs to the pyridoxamine 5'-phosphate oxidase family. As to quaternary structure, homodimer. FMN is required as a cofactor.

The enzyme catalyses pyridoxamine 5'-phosphate + O2 + H2O = pyridoxal 5'-phosphate + H2O2 + NH4(+). The catalysed reaction is pyridoxine 5'-phosphate + O2 = pyridoxal 5'-phosphate + H2O2. Its pathway is cofactor metabolism; pyridoxal 5'-phosphate salvage; pyridoxal 5'-phosphate from pyridoxamine 5'-phosphate: step 1/1. It functions in the pathway cofactor metabolism; pyridoxal 5'-phosphate salvage; pyridoxal 5'-phosphate from pyridoxine 5'-phosphate: step 1/1. Catalyzes the oxidation of either pyridoxine 5'-phosphate (PNP) or pyridoxamine 5'-phosphate (PMP) into pyridoxal 5'-phosphate (PLP). This Anaplasma marginale (strain St. Maries) protein is Pyridoxine/pyridoxamine 5'-phosphate oxidase.